Here is a 395-residue protein sequence, read N- to C-terminus: Vibriobactin-specific isochorismate synthase (395 aa).

This sequence belongs to the isochorismate synthase family.

The enzyme catalyses chorismate = isochorismate. The protein operates within siderophore biosynthesis; vibriobactin biosynthesis. The protein is Vibriobactin-specific isochorismate synthase (vibC) of Vibrio cholerae serotype O1 (strain ATCC 39315 / El Tor Inaba N16961).